The primary structure comprises 468 residues: ATP synthase subunit beta (468 aa).

155-162 (GGAGVGKT) provides a ligand contact to ATP.

The protein belongs to the ATPase alpha/beta chains family. In terms of assembly, F-type ATPases have 2 components, CF(1) - the catalytic core - and CF(0) - the membrane proton channel. CF(1) has five subunits: alpha(3), beta(3), gamma(1), delta(1), epsilon(1). CF(0) has three main subunits: a(1), b(2) and c(9-12). The alpha and beta chains form an alternating ring which encloses part of the gamma chain. CF(1) is attached to CF(0) by a central stalk formed by the gamma and epsilon chains, while a peripheral stalk is formed by the delta and b chains.

It is found in the cell membrane. It carries out the reaction ATP + H2O + 4 H(+)(in) = ADP + phosphate + 5 H(+)(out). Produces ATP from ADP in the presence of a proton gradient across the membrane. The catalytic sites are hosted primarily by the beta subunits. The protein is ATP synthase subunit beta of Streptococcus pyogenes serotype M3 (strain ATCC BAA-595 / MGAS315).